A 132-amino-acid chain; its full sequence is Intraflagellar transport protein 20 homolog B (132 aa).

The stretch at 87–112 (EAQQQQLYALIAEKKMQLERYRIEYD) forms a coiled coil.

It is found in the golgi apparatus. The protein resides in the cis-Golgi network. It localises to the cytoplasm. Its subcellular location is the cytoskeleton. The protein localises to the microtubule organizing center. It is found in the centrosome. The protein resides in the centriole. It localises to the cell projection. Its subcellular location is the cilium. Its function is as follows. Involved in ciliary process assembly. May play a role in the trafficking of ciliary membrane proteins from the Golgi complex to the cilium. Regulates the platelet-derived growth factor receptor-alpha (PDGFRA) signaling pathway. Plays an important role in spermatogenesis, particularly spermiogenesis, when germ cells form flagella. This Xenopus laevis (African clawed frog) protein is Intraflagellar transport protein 20 homolog B (ift20-b).